Here is a 206-residue protein sequence, read N- to C-terminus: Small ribosomal subunit protein uS4 (206 aa).

The region spanning 96–159 is the S4 RNA-binding domain; sequence TRLDNVVYRM…KKQARISASL (64 aa).

It belongs to the universal ribosomal protein uS4 family. In terms of assembly, part of the 30S ribosomal subunit. Contacts protein S5. The interaction surface between S4 and S5 is involved in control of translational fidelity.

Its function is as follows. One of the primary rRNA binding proteins, it binds directly to 16S rRNA where it nucleates assembly of the body of the 30S subunit. With S5 and S12 plays an important role in translational accuracy. This Shewanella violacea protein is Small ribosomal subunit protein uS4.